The following is a 581-amino-acid chain: Estrogen receptor (581 aa).

The segment at 1 to 144 (MYPEDSRVSG…GFEMAKEMRF (144 aa)) is modulating. Disordered stretches follow at residues 45 to 66 (APLDAHGPPSDGSLQSLGSGPN) and 99 to 123 (RSSVPSSQHSVSREDQCGTSDDSYS). The segment covering 56–66 (GSLQSLGSGPN) has biased composition (polar residues). Residues 142 to 217 (MRFCAVCSDY…VGMMKGGVRK (76 aa)) constitute a DNA-binding region (nuclear receptor). NR C4-type zinc fingers lie at residues 145–165 (CAVCSDYASGYHYGVWSCEGC) and 181–200 (CPATNQCTIDRNRRKSCQAC). The tract at residues 211–272 (MKGGVRKDRG…GGGKSSVISM (62 aa)) is hinge. The segment covering 216–246 (RKDRGRVLRRDKRRTGTSDRDKASKGLEHRT) has biased composition (basic and acidic residues). The interval 216-269 (RKDRGRVLRRDKRRTGTSDRDKASKGLEHRTAPPQDRRKHISSSAGGGGGKSSV) is disordered. Residues 273 to 509 (PPDQVLLLLR…DLLLEMLDAH (237 aa)) form the NR LBD domain. Positions 514-528 (PDRPAETWSQADREP) are enriched in basic and acidic residues. The interval 514 to 581 (PDRPAETWSQ…VHPHPMKPTE (68 aa)) is disordered. The segment covering 572–581 (VHPHPMKPTE) has biased composition (basic residues).

The protein belongs to the nuclear hormone receptor family. NR3 subfamily. As to quaternary structure, binds DNA as a homodimer. Can form a heterodimer with ER-beta.

It is found in the nucleus. Its function is as follows. The steroid hormones and their receptors are involved in the regulation of eukaryotic gene expression and affect cellular proliferation and differentiation in target tissues. The sequence is that of Estrogen receptor (esr1) from Sparus aurata (Gilthead sea bream).